The following is a 323-amino-acid chain: Olfactory receptor 6T1 (323 aa).

Residues 1–25 (MNPENWTQVTSFVLLGFPSSHLIQF) lie on the Extracellular side of the membrane. The N-linked (GlcNAc...) asparagine glycan is linked to Asn-5. Residues 26 to 46 (LVFLGLMVTYIVTATGKLLII) traverse the membrane as a helical segment. Residues 47–54 (VLSWIDQR) are Cytoplasmic-facing. A helical transmembrane segment spans residues 55–75 (LHIQMYFFLRNFSFLELLLVT). Residues 76-99 (VVVPKMLVVILTGDHTISFVSCII) are Extracellular-facing. A disulfide bond links Cys-97 and Cys-189. A helical membrane pass occupies residues 100–120 (QSYLYFFLGTTDFFLLAVMSL). Residues 121–139 (DRYLAICRPLRYETLMNGH) are Cytoplasmic-facing. Residues 140-160 (VCSQLVLASWLAGFLWVLCPT) traverse the membrane as a helical segment. At 161–197 (VLMASLPFCGPNGIDHFFRDSWPLLRLSCGDTHLLKL) the chain is on the extracellular side. The chain crosses the membrane as a helical span at residues 198–217 (VAFMLSTLVLLGSLALTSVS). Residues 218-237 (YACILATVLRAPTAAERRKA) are Cytoplasmic-facing. A helical transmembrane segment spans residues 238 to 258 (FSTCASHLTVVVIIYGSSIFL). The Extracellular segment spans residues 259–271 (YIRMSEAQSKLLN). A helical membrane pass occupies residues 272 to 292 (KGASVLSCIITPLLNPFIFTL). Residues 293 to 323 (RNDKVQQALREALGWPRLTAVMKLRVTSQRK) lie on the Cytoplasmic side of the membrane.

It belongs to the G-protein coupled receptor 1 family.

It is found in the cell membrane. In terms of biological role, odorant receptor. In Homo sapiens (Human), this protein is Olfactory receptor 6T1 (OR6T1).